We begin with the raw amino-acid sequence, 231 residues long: Large ribosomal subunit protein uL1 (231 aa).

The protein belongs to the universal ribosomal protein uL1 family. Part of the 50S ribosomal subunit.

Functionally, binds directly to 23S rRNA. The L1 stalk is quite mobile in the ribosome, and is involved in E site tRNA release. In terms of biological role, protein L1 is also a translational repressor protein, it controls the translation of the L11 operon by binding to its mRNA. In Nitrosococcus oceani (strain ATCC 19707 / BCRC 17464 / JCM 30415 / NCIMB 11848 / C-107), this protein is Large ribosomal subunit protein uL1.